Here is a 427-residue protein sequence, read N- to C-terminus: CCA-adding enzyme (427 aa).

The ATP site is built by S50 and K53. 2 residues coordinate CTP: S50 and K53. Residues D61, D63, and D112 each coordinate Mg(2+). The ATP site is built by H135, K155, and Y164. 3 residues coordinate CTP: H135, K155, and Y164.

This sequence belongs to the tRNA nucleotidyltransferase/poly(A) polymerase family. Archaeal CCA-adding enzyme subfamily. In terms of assembly, homodimer. The cofactor is Mg(2+).

The catalysed reaction is a tRNA precursor + 2 CTP + ATP = a tRNA with a 3' CCA end + 3 diphosphate. It catalyses the reaction a tRNA with a 3' CCA end + 2 CTP + ATP = a tRNA with a 3' CCACCA end + 3 diphosphate. Catalyzes the addition and repair of the essential 3'-terminal CCA sequence in tRNAs without using a nucleic acid template. Adds these three nucleotides in the order of C, C, and A to the tRNA nucleotide-73, using CTP and ATP as substrates and producing inorganic pyrophosphate. tRNA 3'-terminal CCA addition is required both for tRNA processing and repair. Also involved in tRNA surveillance by mediating tandem CCA addition to generate a CCACCA at the 3' terminus of unstable tRNAs. While stable tRNAs receive only 3'-terminal CCA, unstable tRNAs are marked with CCACCA and rapidly degraded. In Picrophilus torridus (strain ATCC 700027 / DSM 9790 / JCM 10055 / NBRC 100828 / KAW 2/3), this protein is CCA-adding enzyme.